A 1198-amino-acid polypeptide reads, in one-letter code: Spindle-defective protein 5 (1198 aa).

Residues 1–10 show a composition bias toward polar residues; sequence MEDNSVLNED. The segment at 1-45 is disordered; the sequence is MEDNSVLNEDSNLEHVEGQPRRSMSQPVLNVEGDKRTSSTSATQQ. 5 coiled-coil regions span residues 67 to 381, 566 to 603, 694 to 916, 983 to 1035, and 1127 to 1175; these read EENK…QLTG, HDVA…FEEI, KFTS…LSTS, DELC…ENVP, and KNET…EFQD.

It is found in the cytoplasm. Its subcellular location is the cytoskeleton. The protein resides in the microtubule organizing center. It localises to the centrosome. Functionally, plays a central role in centrosome maturation and mitotic spindle assembly during the first division of the zygote. Required for the centrosomal localization of air-1 and zyg-9. Probably not required in late embryogenesis and during larval development. This is Spindle-defective protein 5 (spd-5) from Caenorhabditis elegans.